Consider the following 78-residue polypeptide: Large ribosomal subunit protein bL28 (78 aa).

Belongs to the bacterial ribosomal protein bL28 family.

The sequence is that of Large ribosomal subunit protein bL28 from Shigella boydii serotype 4 (strain Sb227).